The sequence spans 552 residues: (R)-mandelonitrile lyase-like (552 aa).

Residues Met1–Ala28 form the signal peptide. A glycan (N-linked (GlcNAc...) asparagine) is linked at Asn44. Asp55–Glu82 is an FAD binding site. N-linked (GlcNAc...) asparagine glycosylation is found at Asn162, Asn259, and Asn434. His492 acts as the Proton acceptor in catalysis.

This sequence belongs to the GMC oxidoreductase family. In terms of assembly, monomer. The cofactor is FAD. In terms of processing, glycosylated.

It carries out the reaction (R)-mandelonitrile = benzaldehyde + hydrogen cyanide. The protein is (R)-mandelonitrile lyase-like of Arabidopsis thaliana (Mouse-ear cress).